Reading from the N-terminus, the 130-residue chain is Small ribosomal subunit protein uS9 (130 aa).

The protein belongs to the universal ribosomal protein uS9 family.

This Shewanella baltica (strain OS155 / ATCC BAA-1091) protein is Small ribosomal subunit protein uS9.